A 506-amino-acid chain; its full sequence is Maturase K (506 aa).

The protein belongs to the intron maturase 2 family. MatK subfamily.

The protein resides in the plastid. It localises to the chloroplast. Functionally, usually encoded in the trnK tRNA gene intron. Probably assists in splicing its own and other chloroplast group II introns. The chain is Maturase K from Melilotus indicus (Sourclover).